We begin with the raw amino-acid sequence, 501 residues long: MTATSAAELLDYDDVVARFEPVMGMEVHVELSTATKMFCGCANAFGAEPNTQVCPVCLGLPGSLPVLNQQAVESAIRIGLALNCEIVPWCRFARKNYFYPDQPKNYQISQYDEPIAINGYLDVPLDDGSTWRVEIERAHMEEDTGKLTHLGSDTGRIAGATNSLADYNRAGVPLIEIVTRPIEGAGVKAPEIARAYVTALRDLLRALGVSDVRMDQGSMRCDANLSLKPIGQAEFGTRTETKNVNSLKSVEVAVRYEMRRQAAVLTSGGQVHQETRHFHEDGYTSPGRSKETAEDYRYFPEPDLEPVAPDAEFVEHLRQSLPELPWLRRNRIQQEWGISDEVMRDLVNNGAIDLVAATVEQGASSEAARAWWGNFLVQKANESGVELDALPITPAQVAAVVKLVDDGKLSNKLARQVVEGVLAGEGEPAQVMADRGLEVVRDDSALQAAVDEALAANPGIVEKIRGGKVQAAGAIVGAVMKATKGQADAARVRELVLAACS.

Belongs to the GatB/GatE family. GatB subfamily. In terms of assembly, heterotrimer of A, B and C subunits.

The catalysed reaction is L-glutamyl-tRNA(Gln) + L-glutamine + ATP + H2O = L-glutaminyl-tRNA(Gln) + L-glutamate + ADP + phosphate + H(+). It carries out the reaction L-aspartyl-tRNA(Asn) + L-glutamine + ATP + H2O = L-asparaginyl-tRNA(Asn) + L-glutamate + ADP + phosphate + 2 H(+). Functionally, allows the formation of correctly charged Asn-tRNA(Asn) or Gln-tRNA(Gln) through the transamidation of misacylated Asp-tRNA(Asn) or Glu-tRNA(Gln) in organisms which lack either or both of asparaginyl-tRNA or glutaminyl-tRNA synthetases. The reaction takes place in the presence of glutamine and ATP through an activated phospho-Asp-tRNA(Asn) or phospho-Glu-tRNA(Gln). This chain is Aspartyl/glutamyl-tRNA(Asn/Gln) amidotransferase subunit B, found in Mycobacterium sp. (strain KMS).